The chain runs to 107 residues: Thioredoxin 1 (107 aa).

Residues 2–107 (SVAAAVTDAT…TLANTLDKHL (106 aa)) enclose the Thioredoxin domain. A disulfide bridge connects residues Cys32 and Cys35.

The protein belongs to the thioredoxin family.

Its function is as follows. Participates in various redox reactions through the reversible oxidation of its active center dithiol to a disulfide and catalyzes dithiol-disulfide exchange reactions. The protein is Thioredoxin 1 (trxA) of Synechococcus elongatus (strain ATCC 33912 / PCC 7942 / FACHB-805) (Anacystis nidulans R2).